The primary structure comprises 390 residues: MQFAKRLEKIPPYLFAEINRKREALIAQGVDIINIGVGDPDKPTPAHILQAMREAIDEASNHNYPPYEGTQEFREAAVKWMERRFGVVDLNPNTEVVSSIGSKEAIHNTFLAFVEAGDYTLIPDPGYPVYRTSTIFAGGEPFTMPLKAENKFLPDLDLIPEEVARKAKMLWVNYPNNPTGALATLEFFEELVAFCQQHSILLCHDHAYSEMAYDGYKPPSVLQIPGAKDIAIEFHSLSKSYNMTGWRIGFAVGNAYAIQGLSQVKTNVDSGVFKAIQKAAIAAYNTDEVELQAVMSVYQNRRDIIVKGLQSLGWPIEPPKATLYVWVPVPPGYTSTEFTTLLLDKCGIVVPPGVGYGVSGEGYFRIALTICEERLHEAIQRMQDAGIRYS.

The substrate site is built by Y13 and G38. Residues Y67, 102–103 (SK), Y127, N177, Y208, and 236–238 (SLS) contribute to the pyridoxal 5'-phosphate site. Substrate-binding residues include K103, Y127, and N177. At K239 the chain carries N6-(pyridoxal phosphate)lysine. Pyridoxal 5'-phosphate is bound at residue R247. R365 is a substrate binding site.

It belongs to the class-I pyridoxal-phosphate-dependent aminotransferase family. LL-diaminopimelate aminotransferase subfamily. Homodimer. It depends on pyridoxal 5'-phosphate as a cofactor.

It carries out the reaction (2S,6S)-2,6-diaminopimelate + 2-oxoglutarate = (S)-2,3,4,5-tetrahydrodipicolinate + L-glutamate + H2O + H(+). It participates in amino-acid biosynthesis; L-lysine biosynthesis via DAP pathway; LL-2,6-diaminopimelate from (S)-tetrahydrodipicolinate (aminotransferase route): step 1/1. Its function is as follows. Involved in the synthesis of meso-diaminopimelate (m-DAP or DL-DAP), required for both lysine and peptidoglycan biosynthesis. Catalyzes the direct conversion of tetrahydrodipicolinate to LL-diaminopimelate. In Trichormus variabilis (strain ATCC 29413 / PCC 7937) (Anabaena variabilis), this protein is LL-diaminopimelate aminotransferase 2.